The chain runs to 407 residues: Imidazolonepropionase (407 aa).

Fe(3+) contacts are provided by His75 and His77. Zn(2+) contacts are provided by His75 and His77. 4-imidazolone-5-propanoate-binding residues include Arg84, Tyr147, and His180. An N-formimidoyl-L-glutamate-binding site is contributed by Tyr147. His245 provides a ligand contact to Fe(3+). His245 contributes to the Zn(2+) binding site. Gln248 serves as a coordination point for 4-imidazolone-5-propanoate. Asp320 is a Fe(3+) binding site. Asp320 serves as a coordination point for Zn(2+). Positions 322 and 324 each coordinate N-formimidoyl-L-glutamate. Ser325 lines the 4-imidazolone-5-propanoate pocket.

It belongs to the metallo-dependent hydrolases superfamily. HutI family. Zn(2+) is required as a cofactor. The cofactor is Fe(3+).

The protein resides in the cytoplasm. It catalyses the reaction 4-imidazolone-5-propanoate + H2O = N-formimidoyl-L-glutamate. It participates in amino-acid degradation; L-histidine degradation into L-glutamate; N-formimidoyl-L-glutamate from L-histidine: step 3/3. Functionally, catalyzes the hydrolytic cleavage of the carbon-nitrogen bond in imidazolone-5-propanoate to yield N-formimidoyl-L-glutamate. It is the third step in the universal histidine degradation pathway. The sequence is that of Imidazolonepropionase from Pseudoalteromonas atlantica (strain T6c / ATCC BAA-1087).